A 158-amino-acid polypeptide reads, in one-letter code: 3-hydroxyacyl-[acyl-carrier-protein] dehydratase FabZ (158 aa).

Residue His-61 is part of the active site.

It belongs to the thioester dehydratase family. FabZ subfamily.

It localises to the cytoplasm. The catalysed reaction is a (3R)-hydroxyacyl-[ACP] = a (2E)-enoyl-[ACP] + H2O. In terms of biological role, involved in unsaturated fatty acids biosynthesis. Catalyzes the dehydration of short chain beta-hydroxyacyl-ACPs and long chain saturated and unsaturated beta-hydroxyacyl-ACPs. In Methylobacterium radiotolerans (strain ATCC 27329 / DSM 1819 / JCM 2831 / NBRC 15690 / NCIMB 10815 / 0-1), this protein is 3-hydroxyacyl-[acyl-carrier-protein] dehydratase FabZ.